The chain runs to 384 residues: Homoserine O-succinyltransferase (384 aa).

An AB hydrolase-1 domain is found at 51-361 (NAILICHALS…ETSQGHDAFL (311 aa)). The Nucleophile role is filled by Ser157. Residue Arg227 participates in substrate binding. Residues Asp324 and His357 contribute to the active site. Position 358 (Asp358) interacts with substrate.

It belongs to the AB hydrolase superfamily. MetX family. In terms of assembly, homodimer.

The protein resides in the cytoplasm. It carries out the reaction L-homoserine + succinyl-CoA = O-succinyl-L-homoserine + CoA. It participates in amino-acid biosynthesis; L-methionine biosynthesis via de novo pathway; O-succinyl-L-homoserine from L-homoserine: step 1/1. In terms of biological role, transfers a succinyl group from succinyl-CoA to L-homoserine, forming succinyl-L-homoserine. The sequence is that of Homoserine O-succinyltransferase from Alkalilimnicola ehrlichii (strain ATCC BAA-1101 / DSM 17681 / MLHE-1).